We begin with the raw amino-acid sequence, 160 residues long: Serine-protein kinase RsbW (160 aa).

It belongs to the anti-sigma-factor family.

It carries out the reaction L-seryl-[protein] + ATP = O-phospho-L-seryl-[protein] + ADP + H(+). The enzyme catalyses L-threonyl-[protein] + ATP = O-phospho-L-threonyl-[protein] + ADP + H(+). Negative regulator of sigma-B activity. Phosphorylates and inactivates its specific antagonist protein, RsbV. Upon phosphorylation of RsbV, RsbW is released and binds to sigma-B, thereby blocking its ability to form an RNA polymerase holoenzyme (E-sigma-B). The protein is Serine-protein kinase RsbW of Bacillus cereus (strain ZK / E33L).